A 500-amino-acid chain; its full sequence is Cytochrome P450 2D3 (500 aa).

Residue Cys-446 coordinates heme.

This sequence belongs to the cytochrome P450 family. The cofactor is heme.

The protein localises to the endoplasmic reticulum membrane. The protein resides in the microsome membrane. The catalysed reaction is an organic molecule + reduced [NADPH--hemoprotein reductase] + O2 = an alcohol + oxidized [NADPH--hemoprotein reductase] + H2O + H(+). In terms of biological role, cytochromes P450 are a group of heme-thiolate monooxygenases. In liver microsomes, this enzyme is involved in an NADPH-dependent electron transport pathway. It oxidizes a variety of structurally unrelated compounds, including steroids, fatty acids, and xenobiotics. This Rattus norvegicus (Rat) protein is Cytochrome P450 2D3 (Cyp2d3).